The sequence spans 188 residues: Putative manganese efflux pump MntP (188 aa).

The next 6 helical transmembrane spans lie at 3–23 (FYAL…VALA), 35–55 (IAAT…AGWV), 63–83 (FISE…GLKM), 107–127 (VLTA…LAFM), 131–151 (IAFA…VGLA), and 167–187 (AGGL…LGLI).

It belongs to the MntP (TC 9.B.29) family.

The protein resides in the cell inner membrane. Functionally, probably functions as a manganese efflux pump. This is Putative manganese efflux pump MntP from Neisseria meningitidis serogroup A / serotype 4A (strain DSM 15465 / Z2491).